The chain runs to 101 residues: Threonine-rich inner membrane protein GfcA (101 aa).

An N-terminal signal peptide occupies residues 1-21 (MKHKLSAILMAFMLTTPAAFA). The Cytoplasmic segment spans residues 22–59 (APEATNGTEATTGTTGTTTTTTGATTTATTTGGVAAGA). Positions 24–45 (EATNGTEATTGTTGTTTTTTGA) are disordered. The helical transmembrane segment at 60 to 80 (VGTATVVGVATAVGVATLAVV) threads the bilayer. Residues 81 to 101 (AANDSGDGGSHNTSTTTSTTR) are Periplasmic-facing. The interval 82 to 101 (ANDSGDGGSHNTSTTTSTTR) is disordered.

It is found in the cell inner membrane. This Escherichia coli (strain K12) protein is Threonine-rich inner membrane protein GfcA (gfcA).